A 385-amino-acid chain; its full sequence is 1-deoxy-D-xylulose 5-phosphate reductoisomerase (385 aa).

NADPH-binding residues include Thr13, Gly14, Ser15, Ile16, Asn40, and Asn122. A 1-deoxy-D-xylulose 5-phosphate-binding site is contributed by Lys123. Residue Glu124 coordinates NADPH. Mn(2+) is bound at residue Asp148. 1-deoxy-D-xylulose 5-phosphate-binding residues include Ser149, Glu150, Ser177, and His200. Glu150 serves as a coordination point for Mn(2+). Gly206 is an NADPH binding site. 1-deoxy-D-xylulose 5-phosphate is bound by residues Ser213, Asn218, Lys219, and Glu222. Glu222 contacts Mn(2+).

The protein belongs to the DXR family. Mg(2+) is required as a cofactor. It depends on Mn(2+) as a cofactor.

It catalyses the reaction 2-C-methyl-D-erythritol 4-phosphate + NADP(+) = 1-deoxy-D-xylulose 5-phosphate + NADPH + H(+). It functions in the pathway isoprenoid biosynthesis; isopentenyl diphosphate biosynthesis via DXP pathway; isopentenyl diphosphate from 1-deoxy-D-xylulose 5-phosphate: step 1/6. In terms of biological role, catalyzes the NADPH-dependent rearrangement and reduction of 1-deoxy-D-xylulose-5-phosphate (DXP) to 2-C-methyl-D-erythritol 4-phosphate (MEP). In Francisella tularensis subsp. tularensis (strain WY96-3418), this protein is 1-deoxy-D-xylulose 5-phosphate reductoisomerase.